A 545-amino-acid polypeptide reads, in one-letter code: Glucans biosynthesis protein G (545 aa).

Residues 1 to 34 (MVSLLRCQSFKPSSSLICSLALSAAFALSSSAFA) form the signal peptide. The segment at 38-60 (KPAENKPATPVVSPPKATAQPAN) is disordered.

It belongs to the OpgD/OpgG family.

The protein localises to the periplasm. Its pathway is glycan metabolism; osmoregulated periplasmic glucan (OPG) biosynthesis. Involved in the biosynthesis of osmoregulated periplasmic glucans (OPGs). In Shewanella sp. (strain ANA-3), this protein is Glucans biosynthesis protein G.